The chain runs to 218 residues: Ribose-5-phosphate isomerase A (218 aa).

Residues 28-31, 81-84, and 94-97 contribute to the substrate site; these read TGST, DGAD, and KGGG. Residue glutamate 103 is the Proton acceptor of the active site. Position 121 (lysine 121) interacts with substrate.

This sequence belongs to the ribose 5-phosphate isomerase family. As to quaternary structure, homodimer.

It carries out the reaction aldehydo-D-ribose 5-phosphate = D-ribulose 5-phosphate. It functions in the pathway carbohydrate degradation; pentose phosphate pathway; D-ribose 5-phosphate from D-ribulose 5-phosphate (non-oxidative stage): step 1/1. Functionally, catalyzes the reversible conversion of ribose-5-phosphate to ribulose 5-phosphate. The sequence is that of Ribose-5-phosphate isomerase A from Psychromonas ingrahamii (strain DSM 17664 / CCUG 51855 / 37).